The following is a 151-amino-acid chain: MMKEMRKKPHVLIVEARFYEKISDALLKGAVSALQKAEASYDTITVPGALEIPAAIAFAEQNKISYDGYVALGCVIRGETYHFEIVANDSCRALMDLTVHKRLAIGNGILTVENEEQAWERAKQDDKNKGGFAAEAALCMIALKKRFGDNR.

5-amino-6-(D-ribitylamino)uracil is bound by residues Phe18, 49–51 (ALE), and 74–76 (CVI). Residue 79 to 80 (ET) coordinates (2S)-2-hydroxy-3-oxobutyl phosphate. His82 acts as the Proton donor in catalysis. Position 107 (Asn107) interacts with 5-amino-6-(D-ribitylamino)uracil. Arg121 provides a ligand contact to (2S)-2-hydroxy-3-oxobutyl phosphate.

Belongs to the DMRL synthase family.

The catalysed reaction is (2S)-2-hydroxy-3-oxobutyl phosphate + 5-amino-6-(D-ribitylamino)uracil = 6,7-dimethyl-8-(1-D-ribityl)lumazine + phosphate + 2 H2O + H(+). It functions in the pathway cofactor biosynthesis; riboflavin biosynthesis; riboflavin from 2-hydroxy-3-oxobutyl phosphate and 5-amino-6-(D-ribitylamino)uracil: step 1/2. Its function is as follows. Catalyzes the formation of 6,7-dimethyl-8-ribityllumazine by condensation of 5-amino-6-(D-ribitylamino)uracil with 3,4-dihydroxy-2-butanone 4-phosphate. This is the penultimate step in the biosynthesis of riboflavin. This Bartonella tribocorum (strain CIP 105476 / IBS 506) protein is 6,7-dimethyl-8-ribityllumazine synthase.